A 187-amino-acid chain; its full sequence is Orotate phosphoribosyltransferase (187 aa).

5-phospho-alpha-D-ribose 1-diphosphate is bound at residue 110-118 (EDVVTTGGS). Positions 114 and 142 each coordinate orotate.

This sequence belongs to the purine/pyrimidine phosphoribosyltransferase family. PyrE subfamily. As to quaternary structure, homodimer. The cofactor is Mg(2+).

The enzyme catalyses orotidine 5'-phosphate + diphosphate = orotate + 5-phospho-alpha-D-ribose 1-diphosphate. Its pathway is pyrimidine metabolism; UMP biosynthesis via de novo pathway; UMP from orotate: step 1/2. Its function is as follows. Catalyzes the transfer of a ribosyl phosphate group from 5-phosphoribose 1-diphosphate to orotate, leading to the formation of orotidine monophosphate (OMP). The polypeptide is Orotate phosphoribosyltransferase (Thermotoga maritima (strain ATCC 43589 / DSM 3109 / JCM 10099 / NBRC 100826 / MSB8)).